The primary structure comprises 366 residues: tRNA/tmRNA (uracil-C(5))-methyltransferase (366 aa).

S-adenosyl-L-methionine is bound by residues Q190, Y218, N223, E239, and D299. C324 serves as the catalytic Nucleophile. E358 functions as the Proton acceptor in the catalytic mechanism.

Belongs to the class I-like SAM-binding methyltransferase superfamily. RNA M5U methyltransferase family. TrmA subfamily.

The catalysed reaction is uridine(54) in tRNA + S-adenosyl-L-methionine = 5-methyluridine(54) in tRNA + S-adenosyl-L-homocysteine + H(+). It carries out the reaction uridine(341) in tmRNA + S-adenosyl-L-methionine = 5-methyluridine(341) in tmRNA + S-adenosyl-L-homocysteine + H(+). In terms of biological role, dual-specificity methyltransferase that catalyzes the formation of 5-methyluridine at position 54 (m5U54) in all tRNAs, and that of position 341 (m5U341) in tmRNA (transfer-mRNA). The polypeptide is tRNA/tmRNA (uracil-C(5))-methyltransferase (Escherichia coli O127:H6 (strain E2348/69 / EPEC)).